Consider the following 264-residue polypeptide: MKQYLELMKKVLDEGTQKNDRTGTGTLSIFGHQMRFNLQEGFPLVTTKRCHLRSIIHELLWFLQGDTNIAYLHENNVTIWDEWADENGDLGPVYGKQWRAWPTPDGHHIDQITTVLSQLKNDPDSRRIIVSAWNVGELDKMALAPCHAFFQFYVADRKLSCQLYQRSCDVFLGLPFNIASYALLVHMMAQQCDLEAGDFIWTGGDTHLYSNHMEQTHLQLSREPRALPKLVIKRKPDSLFDYRFDDFEIEGYDPHPGIKAPVAI.

Arg21 lines the dUMP pocket. Position 51 (His51) interacts with (6R)-5,10-methylene-5,6,7,8-tetrahydrofolate. 126-127 lines the dUMP pocket; sequence RR. The Nucleophile role is filled by Cys146. DUMP contacts are provided by residues 166–169, Asn177, and 207–209; these read RSCD and HLY. Asp169 lines the (6R)-5,10-methylene-5,6,7,8-tetrahydrofolate pocket. Residue Ala263 coordinates (6R)-5,10-methylene-5,6,7,8-tetrahydrofolate.

The protein belongs to the thymidylate synthase family. Bacterial-type ThyA subfamily. In terms of assembly, homodimer.

It is found in the cytoplasm. It carries out the reaction dUMP + (6R)-5,10-methylene-5,6,7,8-tetrahydrofolate = 7,8-dihydrofolate + dTMP. It participates in pyrimidine metabolism; dTTP biosynthesis. In terms of biological role, catalyzes the reductive methylation of 2'-deoxyuridine-5'-monophosphate (dUMP) to 2'-deoxythymidine-5'-monophosphate (dTMP) while utilizing 5,10-methylenetetrahydrofolate (mTHF) as the methyl donor and reductant in the reaction, yielding dihydrofolate (DHF) as a by-product. This enzymatic reaction provides an intracellular de novo source of dTMP, an essential precursor for DNA biosynthesis. In Salmonella arizonae (strain ATCC BAA-731 / CDC346-86 / RSK2980), this protein is Thymidylate synthase.